Reading from the N-terminus, the 192-residue chain is Glycerol-3-phosphate acyltransferase (192 aa).

5 helical membrane-spanning segments follow: residues 4-24, 54-74, 80-100, 112-132, and 154-174; these read MFWLLATFAYLLGSLSFAILL, LAVLTLLGDLCKGLIPVVLAG, PSQQGWIGVCAVLGHLFPLYF, AGVLLGLYPPAAALAIAAWLL, and LLAWQEPHALLPMSVLTLLIV.

Belongs to the PlsY family. In terms of assembly, probably interacts with PlsX.

It localises to the cell inner membrane. The enzyme catalyses an acyl phosphate + sn-glycerol 3-phosphate = a 1-acyl-sn-glycero-3-phosphate + phosphate. The protein operates within lipid metabolism; phospholipid metabolism. In terms of biological role, catalyzes the transfer of an acyl group from acyl-phosphate (acyl-PO(4)) to glycerol-3-phosphate (G3P) to form lysophosphatidic acid (LPA). This enzyme utilizes acyl-phosphate as fatty acyl donor, but not acyl-CoA or acyl-ACP. This Pseudomonas syringae pv. tomato (strain ATCC BAA-871 / DC3000) protein is Glycerol-3-phosphate acyltransferase.